A 720-amino-acid polypeptide reads, in one-letter code: MPRDYQAEKEKCKTFLQEFYKDDEFGKKNFKYGVQLANIAHREQVALCIDLDDLAEEDPELVDAICENTRRYTNLFADAVQELLPQYKEREVVHKDALDVYIEHRLMMEQRGRDPNEMRDPHNQYPPELMRRFELYFKAPSSSKARVVRDVKADSIGKLVTVRGIVTRVTEVKPMMVVATYTCDQCGAETYQPIQSPTFMPLIMCPSRECQTNRSGGRLYLQTRGSKFIKFQELKIQEHSDQVPVGNIPRCMSVYVRGENTRLAQPGDHVGITGVFLPMLRTGFRQVVQGLLSETYLESHRLVKMNKTEDDELGTEELSEEELRQITEEDFYEKLAASIAPEIYGHEDVKKALLLLLVGGVDHSPRGMKIRGNINVCLMGDPGVAKSQLLSYIDRLAPRSQYTTGRGSSGVGLTAAVMKDPVTGEMTLEGGALVLADQGVCCIDEFDKMMDSDRTAIHEVMEQQTISIAKAGIMTTLNARCSILAAANPAYGRYNPKKTVEQNIQLPAALLSRFDLLWLIQDKPDRDNDLRLAQHITYVHQHSKQPPSQFQPMDMKLMRRYITMCKSKQPAIPESLADYLTAAYVEMRKEARTNKDMTFTSARTLLSILRLSTALARLRLEDVVEKEDVNEAMRLTEMSKDSLQGDKGHASRTQRPADVIFSTIREMVPEKGARSVKYSEAEQRCVSKGFTPAQFEAALEEYEELNVWLVNQARTKITFV.

Residues 183–210 (CDQCGAETYQPIQSPTFMPLIMCPSREC) form a C4-type zinc finger. In terms of domain architecture, MCM spans 331–537 (FYEKLAASIA…NDLRLAQHIT (207 aa)). ATP contacts are provided by Tyr344, Gly383, Ala385, Lys386, Ser387, Asn488, Arg513, and Arg603. The short motif at 512–515 (SRFD) is the Arginine finger element.

Belongs to the MCM family. Component of the mcm2-7 complex (RLF-M). The complex forms a toroidal hexameric ring with the proposed subunit order mcm2-mcm6-mcm4-mcm7-mcm3-mcm5. The heterodimer of mmcm3/mcm5 interacts with mcm4, mmcm6, mcm7 and weakly with mcm2. The N-terminus is required for interaction with mmcm3, though this interaction may not be direct, and remains in a complex with mmcm3 throughout the cell cycle. Begins to associate with zmcm6 at the neurula stage. Component of the replisome complex. Component of the CMG helicase complex, composed of the mcm2-7 complex, the GINS complex and cdc45. In terms of processing, ubiquitinated by traip when forks converge following formation of DNA interstrand cross-links. Short ubiquitin chains on mcm7 promote recruitment of DNA glycosylase neil3. If the interstrand cross-link cannot be cleaved by neil3, the ubiquitin chains continue to grow on mcm7, promoting the unloading of the CMG helicase complex by the vcp/p97 ATPase.

The protein resides in the nucleus. It localises to the chromosome. The enzyme catalyses ATP + H2O = ADP + phosphate + H(+). Its function is as follows. Acts as a component of the mcm2-7 complex (mcm complex) which is the putative replicative helicase essential for 'once per cell cycle' DNA replication initiation and elongation in eukaryotic cells. The active ATPase sites in the mcm2-7 ring are formed through the interaction surfaces of two neighboring subunits such that a critical structure of a conserved arginine finger motif is provided in trans relative to the ATP-binding site of the Walker A box of the adjacent subunit. The six ATPase active sites, however, are likely to contribute differentially to the complex helicase activity. The existence of maternal and zygotic forms of mcm3 and mcm6 suggests that specific forms of mcm2-7 complexes may be used during different stages of development. This chain is DNA replication licensing factor mcm7-B (mcm7-b), found in Xenopus laevis (African clawed frog).